Consider the following 250-residue polypeptide: 2,3-bisphosphoglycerate-dependent phosphoglycerate mutase (250 aa).

Substrate-binding positions include 8 to 15, 21 to 22, arginine 60, 87 to 90, lysine 98, and 114 to 115; these read RHGESTWN, TG, ERHY, and RR. The active-site Tele-phosphohistidine intermediate is histidine 9. Glutamate 87 (proton donor/acceptor) is an active-site residue. A disordered region spans residues 116–135; sequence SYDTPPPPLAANDPRSERSD. 183–184 contributes to the substrate binding site; that stretch reads GN.

Belongs to the phosphoglycerate mutase family. BPG-dependent PGAM subfamily. In terms of assembly, homodimer.

It carries out the reaction (2R)-2-phosphoglycerate = (2R)-3-phosphoglycerate. The protein operates within carbohydrate degradation; glycolysis; pyruvate from D-glyceraldehyde 3-phosphate: step 3/5. Its function is as follows. Catalyzes the interconversion of 2-phosphoglycerate and 3-phosphoglycerate. The protein is 2,3-bisphosphoglycerate-dependent phosphoglycerate mutase of Polaromonas naphthalenivorans (strain CJ2).